Consider the following 338-residue polypeptide: Anthranilate phosphoribosyltransferase (338 aa).

5-phospho-alpha-D-ribose 1-diphosphate contacts are provided by residues glycine 81, 84-85 (GD), threonine 89, 91-94 (NIST), 109-117 (KHGNRAQSS), and threonine 121. Glycine 81 contacts anthranilate. Serine 93 is a Mg(2+) binding site. Asparagine 112 is an anthranilate binding site. Position 167 (arginine 167) interacts with anthranilate. Residues aspartate 225 and glutamate 226 each contribute to the Mg(2+) site.

It belongs to the anthranilate phosphoribosyltransferase family. Homodimer. It depends on Mg(2+) as a cofactor.

It catalyses the reaction N-(5-phospho-beta-D-ribosyl)anthranilate + diphosphate = 5-phospho-alpha-D-ribose 1-diphosphate + anthranilate. The protein operates within amino-acid biosynthesis; L-tryptophan biosynthesis; L-tryptophan from chorismate: step 2/5. Functionally, catalyzes the transfer of the phosphoribosyl group of 5-phosphorylribose-1-pyrophosphate (PRPP) to anthranilate to yield N-(5'-phosphoribosyl)-anthranilate (PRA). The protein is Anthranilate phosphoribosyltransferase of Rhizobium rhizogenes (strain K84 / ATCC BAA-868) (Agrobacterium radiobacter).